A 356-amino-acid polypeptide reads, in one-letter code: UDP-3-O-acylglucosamine N-acyltransferase (356 aa).

His251 acts as the Proton acceptor in catalysis.

It belongs to the transferase hexapeptide repeat family. LpxD subfamily. As to quaternary structure, homotrimer.

It carries out the reaction a UDP-3-O-[(3R)-3-hydroxyacyl]-alpha-D-glucosamine + a (3R)-hydroxyacyl-[ACP] = a UDP-2-N,3-O-bis[(3R)-3-hydroxyacyl]-alpha-D-glucosamine + holo-[ACP] + H(+). It functions in the pathway bacterial outer membrane biogenesis; LPS lipid A biosynthesis. Its function is as follows. Catalyzes the N-acylation of UDP-3-O-acylglucosamine using 3-hydroxyacyl-ACP as the acyl donor. Is involved in the biosynthesis of lipid A, a phosphorylated glycolipid that anchors the lipopolysaccharide to the outer membrane of the cell. The sequence is that of UDP-3-O-acylglucosamine N-acyltransferase from Ralstonia nicotianae (strain ATCC BAA-1114 / GMI1000) (Ralstonia solanacearum).